We begin with the raw amino-acid sequence, 583 residues long: MGMVSSQATPVEAYKVQQVQINDQTVEQLVRVQTSAGTTVTTIDAATAERLVKLREEDLIKFSAQGMSQAQMMAKPGMTSPRPIELCAVCGDKASGRHYGAISCEGCKGFFKRSIRKHLGYTCRGNKDCQIIKHNRNRCQYCRLQKCLDMGMKSDSVQCERSPLKTRDKTPGNCAASTDKIYIRKDIRSPLTATPTFVTGSVLAGGDMKSPQGNRQGLFDQGILLNVQTTPTSSPSASTSDSTTDLSTLASVVTSLANMNKKTEEGPSHSQQIYSPSQTLQIISNGDQDVQGGGDNVSKAFDALTKALNTSGDSEAGDLSIDQSANGGSSEVELVKLDSPMLSDHHMQFKLTTPSPMPQFLNVHYICESASRLLFLSMHWARSLPAFQVLSADTHTSMVQKCWSELFTLGLAQCAQAMALSTILTAIVNHLQTSLQQDKLSADRVKAVMEHIWKLQEFVTTTSKLDVDQTEFAYLKTIVLFSPDHPGLSNVRQIEKFQEMAISELHDYEAQTYPSKLNRFSKLLLRLPTLRLLSPAIMEELFFAGLIGNVQIDSIIPYILRMETADYNSAQITMSASPGSLIG.

Positions 84-159 (IELCAVCGDK…MGMKSDSVQC (76 aa)) form a DNA-binding region, nuclear receptor. NR C4-type zinc fingers lie at residues 87-107 (CAVC…CEGC) and 123-142 (CRGN…CQYC). The NR LBD domain maps to 248 to 563 (TLASVVTSLA…SIIPYILRME (316 aa)).

This sequence belongs to the nuclear hormone receptor family. NR2 subfamily. Binds DNA as a monomer. As to expression, expressed uniformly in the early embryo. In contrast, larval expression is localized to the epaulettes and mouth epithelium. Expressed in multiple adult organs including lantern muscle, tubefeet, intestine, coelomocytes and gonads. In the adult ovaries and testes, expression is specifically localized to the smooth muscle epithelial layer of cells which surround the ovarioles and acini, respectively (at protein level).

It localises to the cytoplasm. Its subcellular location is the nucleus. In terms of biological role, orphan nuclear receptor. Binds to the hormone response element in the upstream promoter region of the CYIIIB gene in vitro. Both isoform 1 and isoform 2 bind DNA. The polypeptide is Orphan steroid hormone receptor 2 (Strongylocentrotus purpuratus (Purple sea urchin)).